The following is a 401-amino-acid chain: Argininosuccinate synthase (401 aa).

8-16 (AYSGGLDTS) provides a ligand contact to ATP. Residue Tyr85 participates in L-citrulline binding. Gly115 contacts ATP. L-aspartate contacts are provided by Thr117, Asn121, and Asp122. An L-citrulline-binding site is contributed by Asn121. The L-citrulline site is built by Arg125, Ser173, Ser182, Glu258, and Tyr270.

Belongs to the argininosuccinate synthase family. Type 1 subfamily. As to quaternary structure, homotetramer.

The protein localises to the cytoplasm. The enzyme catalyses L-citrulline + L-aspartate + ATP = 2-(N(omega)-L-arginino)succinate + AMP + diphosphate + H(+). The protein operates within amino-acid biosynthesis; L-arginine biosynthesis; L-arginine from L-ornithine and carbamoyl phosphate: step 2/3. This Staphylococcus saprophyticus subsp. saprophyticus (strain ATCC 15305 / DSM 20229 / NCIMB 8711 / NCTC 7292 / S-41) protein is Argininosuccinate synthase.